Here is a 488-residue protein sequence, read N- to C-terminus: 3-octaprenyl-4-hydroxybenzoate carboxy-lyase (488 aa).

Asn172 provides a ligand contact to Mn(2+). Prenylated FMN contacts are provided by residues 175–177, 189–191, and 194–195; these read IYR, RWL, and RG. Glu238 contacts Mn(2+). Catalysis depends on Asp287, which acts as the Proton donor.

It belongs to the UbiD family. In terms of assembly, homohexamer. Prenylated FMN is required as a cofactor. It depends on Mn(2+) as a cofactor.

Its subcellular location is the cell membrane. The catalysed reaction is a 4-hydroxy-3-(all-trans-polyprenyl)benzoate + H(+) = a 2-(all-trans-polyprenyl)phenol + CO2. It functions in the pathway cofactor biosynthesis; ubiquinone biosynthesis. Its function is as follows. Catalyzes the decarboxylation of 3-octaprenyl-4-hydroxy benzoate to 2-octaprenylphenol, an intermediate step in ubiquinone biosynthesis. This Pseudomonas putida (strain W619) protein is 3-octaprenyl-4-hydroxybenzoate carboxy-lyase.